A 514-amino-acid chain; its full sequence is MIKRALISVSDKTGIVEFASALASKGIEIISTGGTAKALSAAGLKVINISDITGFPECLDGRVKTLHPKVHAGLLAIRSNEEHMKQIKELGVETIDMVIINLYPFKQTILKGNVELEEAIENIDIGGPTMLRAAAKNYQDVAVIVDPADYKNVLNEMNESGDVSVKTKFRLAYKVFEHTSHYDTLIAKYLRDTLGDIDFPETLSLTYEKAQDMRYGENPHQKAVFYKEVGANTGLLPSAVQLHGKELSFNNINDTNGAIELVKEFDEPTVVAVKHTNPCGVGSADNIYDAYMRAYESDPVSIFGGIIAANREIDAKTAEEINKIFVEIVVAPSFTEDALAVLTQKKNVRLLKLENITDEISPDAYDMKKVAGGLLVQKYNSQLFNQEDLKCVTDVQPTKEQMEDLVFAMKVVKHTKSNAITLAKGKMTIGVGPGQTNRIVPTKVSIEYAGERSQGAVMASDAYFPFSDCVEAAAAAGIKAIIQPGGSIRDQESIDACNKYGIAMVFTGMRHFKH.

Residues 1–145 (MIKRALISVS…KNYQDVAVIV (145 aa)) form the MGS-like domain.

It belongs to the PurH family.

The enzyme catalyses (6R)-10-formyltetrahydrofolate + 5-amino-1-(5-phospho-beta-D-ribosyl)imidazole-4-carboxamide = 5-formamido-1-(5-phospho-D-ribosyl)imidazole-4-carboxamide + (6S)-5,6,7,8-tetrahydrofolate. It carries out the reaction IMP + H2O = 5-formamido-1-(5-phospho-D-ribosyl)imidazole-4-carboxamide. It participates in purine metabolism; IMP biosynthesis via de novo pathway; 5-formamido-1-(5-phospho-D-ribosyl)imidazole-4-carboxamide from 5-amino-1-(5-phospho-D-ribosyl)imidazole-4-carboxamide (10-formyl THF route): step 1/1. It functions in the pathway purine metabolism; IMP biosynthesis via de novo pathway; IMP from 5-formamido-1-(5-phospho-D-ribosyl)imidazole-4-carboxamide: step 1/1. This is Bifunctional purine biosynthesis protein PurH from Ruminiclostridium cellulolyticum (strain ATCC 35319 / DSM 5812 / JCM 6584 / H10) (Clostridium cellulolyticum).